We begin with the raw amino-acid sequence, 555 residues long: Protein peste (555 aa).

Topologically, residues 1 to 7 are cytoplasmic; sequence MTSRTRH. The chain crosses the membrane as a helical span at residues 8–28; the sequence is CARLGIVLLGICCIASGIYLF. Residues 29–434 lie on the Extracellular side of the membrane; sequence RNWIDMFTRM…VRVSEEIAAD (406 aa). 7 N-linked (GlcNAc...) asparagine glycosylation sites follow: N70, N110, N129, N213, N242, N312, and N342. A helical membrane pass occupies residues 435–455; the sequence is IALVPLIVLLGQIVTGILLAG. The Cytoplasmic portion of the chain corresponds to 456–555; the sequence is GLICTCWYPT…SEDSPDVVVR (100 aa).

The protein belongs to the CD36 family.

The protein resides in the cell membrane. (Microbial infection) Plays a role in mycobacterial infection. Mediates infection by M.fortuitum and uptake of M.smegmatis. The polypeptide is Protein peste (Drosophila melanogaster (Fruit fly)).